Consider the following 198-residue polypeptide: ATP-dependent Clp protease proteolytic subunit (198 aa).

The Nucleophile role is filled by serine 103. Residue histidine 128 is part of the active site.

Belongs to the peptidase S14 family. In terms of assembly, fourteen ClpP subunits assemble into 2 heptameric rings which stack back to back to give a disk-like structure with a central cavity, resembling the structure of eukaryotic proteasomes.

It localises to the cytoplasm. The enzyme catalyses Hydrolysis of proteins to small peptides in the presence of ATP and magnesium. alpha-casein is the usual test substrate. In the absence of ATP, only oligopeptides shorter than five residues are hydrolyzed (such as succinyl-Leu-Tyr-|-NHMec, and Leu-Tyr-Leu-|-Tyr-Trp, in which cleavage of the -Tyr-|-Leu- and -Tyr-|-Trp bonds also occurs).. In terms of biological role, cleaves peptides in various proteins in a process that requires ATP hydrolysis. Has a chymotrypsin-like activity. Plays a major role in the degradation of misfolded proteins. This chain is ATP-dependent Clp protease proteolytic subunit, found in Vesicomyosocius okutanii subsp. Calyptogena okutanii (strain HA).